The sequence spans 313 residues: Ketimine reductase mu-crystallin (313 aa).

Position 47 (Arg-47) interacts with 3,3',5-triiodo-L-thyronine. Positions 90, 91, 118, 143, 145, 146, 167, 168, 169, 172, 204, 205, and 225 each coordinate NADPH. Glu-256 is a binding site for 3,3',5-triiodo-L-thyronine. Residue Ser-291 participates in NADPH binding.

Belongs to the ornithine cyclodeaminase/mu-crystallin family. In terms of assembly, homodimer. Binds the thyroid hormone triiodothyronine (T3); T3 binding inhibits enzymatic activity. As to expression, expressed in the spiral ligament of the cochlea (at protein level).

The protein resides in the cytoplasm. The enzyme catalyses L-pipecolate + NADP(+) = Delta(1)-piperideine-2-carboxylate + NADPH + H(+). It catalyses the reaction L-pipecolate + NAD(+) = Delta(1)-piperideine-2-carboxylate + NADH + H(+). The catalysed reaction is L-proline + NADP(+) = 1-pyrroline-2-carboxylate + NADPH + H(+). It carries out the reaction L-proline + NAD(+) = 1-pyrroline-2-carboxylate + NADH + H(+). The enzyme catalyses (3R)-1,4-thiomorpholine-3-carboxylate + NAD(+) = 3,4-dehydrothiomorpholine-3-carboxylate + NADH + 2 H(+). It catalyses the reaction (3R)-1,4-thiomorpholine-3-carboxylate + NADP(+) = 3,4-dehydrothiomorpholine-3-carboxylate + NADPH + 2 H(+). The catalysed reaction is (S)-cystathionine ketimine + NADH + 2 H(+) = (3R,5S)-2,3,5,6,7-pentahydro-1,4-thiazepine-3,5-dicarboxylate + NAD(+). It carries out the reaction (S)-cystathionine ketimine + NADPH + 2 H(+) = (3R,5S)-2,3,5,6,7-pentahydro-1,4-thiazepine-3,5-dicarboxylate + NADP(+). The enzyme catalyses (R)-lanthionine ketimine + NADPH + 2 H(+) = (3R,5R)-1,4-thiomorpholine-3,5-dicarboxylate + NADP(+). It catalyses the reaction Delta(2)-thiazoline-2-carboxylate + NADPH + 2 H(+) = L-thiazolidine-2-carboxylate + NADP(+). Functionally, catalyzes the NAD(P)H-dependent reduction of imine double bonds of a number of cyclic ketimine substrates, including sulfur-containing cyclic ketimines. Under physiological conditions, it efficiently catalyzes delta(1)-piperideine-2-carboxylate (P2C) and delta(1)-pyrroline-2-carboxylate (Pyr2C) reduction, suggesting a central role in lysine and glutamate metabolism. Additional substrates are delta(2)-thiazoline-2-carboxylate (T2C), 3,4-dehydrothiomorpholine-3-carboxylate (AECK), and (R)-lanthionine ketimine (LK) that is reduced at very low rate compared to other substrates. Also catalyzes the NAD(P)H-dependent reduction of (S)-cystathionine ketimine (CysK). In Mus musculus (Mouse), this protein is Ketimine reductase mu-crystallin.